A 289-amino-acid chain; its full sequence is Serine/threonine-protein phosphatase Pgam5, mitochondrial (289 aa).

Residues 7 to 23 (FVCGTGAGLAVYYLQRL) form a helical membrane-spanning segment.

Belongs to the phosphoglycerate mutase family. BPG-dependent PGAM subfamily. In terms of assembly, interacts with Pk92B/ASK1.

Its subcellular location is the mitochondrion outer membrane. The enzyme catalyses O-phospho-L-seryl-[protein] + H2O = L-seryl-[protein] + phosphate. It catalyses the reaction O-phospho-L-threonyl-[protein] + H2O = L-threonyl-[protein] + phosphate. Functionally, displays phosphatase activity for serine/threonine residues, and dephosphorylates and activates Pk92B kinase. Has apparently no phosphoglycerate mutase activity. In Drosophila erecta (Fruit fly), this protein is Serine/threonine-protein phosphatase Pgam5, mitochondrial.